A 172-amino-acid polypeptide reads, in one-letter code: MADVQERLKKLGASARIGYVLVNFFFSQASIGSRWKTGKGTPRRKMKRAPARSGGDDKKLQQTLKKLNVQPIQAIEEVNMFKSDGNVIHFAAPKVHAAVPANTFAIYGNGEDKELTELVPGILNQLGPDSLASLRKLAESYQNMQKADGDKEADDDDIPDLVAGENFEDKVE.

Disordered stretches follow at residues 36 to 58 (KTGK…GDDK) and 142 to 172 (QNMQ…DKVE). Residues 41–50 (TPRRKMKRAP) are compositionally biased toward basic residues. Positions 54–119 (GGDDKKLQQT…GEDKELTELV (66 aa)) constitute an NAC-A/B domain.

It belongs to the NAC-beta family. Part of the nascent polypeptide-associated complex (NAC), consisting of EGD2 and EGD1. NAC associates with ribosomes via EGD1.

It is found in the cytoplasm. It localises to the nucleus. In terms of biological role, component of the nascent polypeptide-associated complex (NAC), a dynamic component of the ribosomal exit tunnel, protecting the emerging polypeptides from interaction with other cytoplasmic proteins to ensure appropriate nascent protein targeting. The NAC complex also promotes mitochondrial protein import by enhancing productive ribosome interactions with the outer mitochondrial membrane and blocks the inappropriate interaction of ribosomes translating non-secretory nascent polypeptides with translocation sites in the membrane of the endoplasmic reticulum. EGD1 may act as a transcription factor that exert a negative effect on the expression of several genes that are transcribed by RNA polymerase II. The polypeptide is Nascent polypeptide-associated complex subunit beta (EGD1) (Pyricularia oryzae (strain 70-15 / ATCC MYA-4617 / FGSC 8958) (Rice blast fungus)).